A 297-amino-acid chain; its full sequence is Probable porphobilinogen deaminase (297 aa).

S-(dipyrrolylmethanemethyl)cysteine is present on Cys241.

The protein belongs to the HMBS family. Dipyrromethane is required as a cofactor.

It carries out the reaction 4 porphobilinogen + H2O = hydroxymethylbilane + 4 NH4(+). Its pathway is porphyrin-containing compound metabolism; protoporphyrin-IX biosynthesis; coproporphyrinogen-III from 5-aminolevulinate: step 2/4. Tetrapolymerization of the monopyrrole PBG into the hydroxymethylbilane pre-uroporphyrinogen in several discrete steps. This Pyrobaculum arsenaticum (strain DSM 13514 / JCM 11321 / PZ6) protein is Probable porphobilinogen deaminase.